A 314-amino-acid polypeptide reads, in one-letter code: 4-hydroxy-3-methylbut-2-enyl diphosphate reductase (314 aa).

Residue C12 participates in [4Fe-4S] cluster binding. 2 residues coordinate (2E)-4-hydroxy-3-methylbut-2-enyl diphosphate: H41 and H74. Dimethylallyl diphosphate contacts are provided by H41 and H74. Positions 41 and 74 each coordinate isopentenyl diphosphate. Residue C96 participates in [4Fe-4S] cluster binding. A (2E)-4-hydroxy-3-methylbut-2-enyl diphosphate-binding site is contributed by H124. H124 provides a ligand contact to dimethylallyl diphosphate. H124 provides a ligand contact to isopentenyl diphosphate. Catalysis depends on E126, which acts as the Proton donor. Residue T167 participates in (2E)-4-hydroxy-3-methylbut-2-enyl diphosphate binding. C197 lines the [4Fe-4S] cluster pocket. (2E)-4-hydroxy-3-methylbut-2-enyl diphosphate-binding residues include S225, S226, N227, and S269. Dimethylallyl diphosphate is bound by residues S225, S226, N227, and S269. Positions 225, 226, 227, and 269 each coordinate isopentenyl diphosphate.

It belongs to the IspH family. [4Fe-4S] cluster is required as a cofactor.

The enzyme catalyses isopentenyl diphosphate + 2 oxidized [2Fe-2S]-[ferredoxin] + H2O = (2E)-4-hydroxy-3-methylbut-2-enyl diphosphate + 2 reduced [2Fe-2S]-[ferredoxin] + 2 H(+). It catalyses the reaction dimethylallyl diphosphate + 2 oxidized [2Fe-2S]-[ferredoxin] + H2O = (2E)-4-hydroxy-3-methylbut-2-enyl diphosphate + 2 reduced [2Fe-2S]-[ferredoxin] + 2 H(+). The protein operates within isoprenoid biosynthesis; dimethylallyl diphosphate biosynthesis; dimethylallyl diphosphate from (2E)-4-hydroxy-3-methylbutenyl diphosphate: step 1/1. It functions in the pathway isoprenoid biosynthesis; isopentenyl diphosphate biosynthesis via DXP pathway; isopentenyl diphosphate from 1-deoxy-D-xylulose 5-phosphate: step 6/6. Its function is as follows. Catalyzes the conversion of 1-hydroxy-2-methyl-2-(E)-butenyl 4-diphosphate (HMBPP) into a mixture of isopentenyl diphosphate (IPP) and dimethylallyl diphosphate (DMAPP). Acts in the terminal step of the DOXP/MEP pathway for isoprenoid precursor biosynthesis. This Actinobacillus pleuropneumoniae serotype 7 (strain AP76) protein is 4-hydroxy-3-methylbut-2-enyl diphosphate reductase.